We begin with the raw amino-acid sequence, 306 residues long: Reticulocalbin-2 (306 aa).

The first 22 residues, 1 to 22, serve as a signal peptide directing secretion; the sequence is MESPTLLGLLLLLLGGPGTSLG. EF-hand domains follow at residues 50–85, 86–121, 144–173, 175–210, 226–251, and 252–287; these read EQQKRLKVIISRIDVDLDGFLTEAELSSWIQHSFKS, YIIEDAKQQFQHYDKDGDGRVSWEEYNIQMYDRVID, KKRFQKANKDGDSHLDFEEFAAFEHPEEAD, MKEFVIQESLEEHDKDGDGFVSLQEFLGDYRRDPAA, NDYDKDKDGKLSPKELLTWVMPNNEG, and LAQEEAVHLLDEMDLDGDRRLSANEILENQDLFLNS. Residues aspartate 99, aspartate 101, aspartate 103, arginine 105, and glutamate 110 each coordinate Ca(2+). Residues aspartate 188, aspartate 190, aspartate 192, glutamate 199, aspartate 229, aspartate 231, aspartate 233, lysine 235, glutamate 240, aspartate 265, aspartate 267, aspartate 269, arginine 271, and glutamate 276 each coordinate Ca(2+).

The protein belongs to the CREC family. As to quaternary structure, may bind phospholipase A2, since the rat reticulocalbin-2 has been isolated on the phospholipase complex taipoxin columns. Expressed by the venom gland.

It localises to the secreted. This chain is Reticulocalbin-2, found in Crotalus adamanteus (Eastern diamondback rattlesnake).